The primary structure comprises 335 residues: Pregnancy-specific beta-1-glycoprotein 2 (335 aa).

A signal peptide spans 1-34 (MGPLSAPPCTEHIKWKGLLVTASLLNFWNLPTTA). In terms of domain architecture, Ig-like V-type spans 35 to 144 (QVTIEAQPPK…TGYFTFTLYL (110 aa)). 4 N-linked (GlcNAc...) asparagine glycosylation sites follow: Asn-61, Asn-104, Asn-111, and Asn-199. 2 Ig-like C2-type domains span residues 147–234 (PKPS…VTLN) and 239–317 (PDLP…TSLT). Cystine bridges form between Cys-169–Cys-217 and Cys-261–Cys-301.

It belongs to the immunoglobulin superfamily. CEA family.

It localises to the secreted. This is Pregnancy-specific beta-1-glycoprotein 2 (PSG2) from Homo sapiens (Human).